Consider the following 600-residue polypeptide: Threonine dehydratase, mitochondrial (600 aa).

The residue at position 144 (K144) is an N6-(pyridoxal phosphate)lysine. ACT-like domains follow at residues 425–497 (VFLS…DISD) and 519–590 (RLYR…DETN).

Belongs to the serine/threonine dehydratase family. In terms of assembly, homotetramer. It depends on pyridoxal 5'-phosphate as a cofactor.

It is found in the mitochondrion. It localises to the cytoplasm. It catalyses the reaction L-threonine = 2-oxobutanoate + NH4(+). The protein operates within amino-acid biosynthesis; L-isoleucine biosynthesis; 2-oxobutanoate from L-threonine: step 1/1. Its activity is regulated as follows. Isoleucine allosterically inhibits while valine allosterically activates this enzyme. The chain is Threonine dehydratase, mitochondrial from Schizosaccharomyces pombe (strain 972 / ATCC 24843) (Fission yeast).